A 198-amino-acid chain; its full sequence is MVEKHLLEFLEKLQFLISKNVKISHYGIENVKKICGVDIAYKGNLGFSVGVSMDINSGDYNYKSYVGEVNFPYIPGFLFMREAPLMIKAIEGLDCHLLLVDGHGIAHPRKSGIAAVIGVLLDFPTIGVAKSRLTGDLVNESEITYVYLNGEKVGVKFGRYFYSPGNKVDLQDCIELGKRGYPKVLKIADMLTKKIKKE.

D38 and D101 together coordinate Mg(2+).

The protein belongs to the endonuclease V family. Mg(2+) is required as a cofactor.

It localises to the cytoplasm. It carries out the reaction Endonucleolytic cleavage at apurinic or apyrimidinic sites to products with a 5'-phosphate.. Its function is as follows. DNA repair enzyme involved in the repair of deaminated bases. Selectively cleaves double-stranded DNA at the second phosphodiester bond 3' to a deoxyinosine leaving behind the intact lesion on the nicked DNA. The protein is Endonuclease V of Saccharolobus islandicus (strain M.16.4 / Kamchatka #3) (Sulfolobus islandicus).